The following is a 491-amino-acid chain: Probable glycine dehydrogenase (decarboxylating) subunit 2 (491 aa).

Lys-274 carries the N6-(pyridoxal phosphate)lysine modification.

The protein belongs to the GcvP family. C-terminal subunit subfamily. As to quaternary structure, the glycine cleavage system is composed of four proteins: P, T, L and H. In this organism, the P 'protein' is a heterodimer of two subunits. It depends on pyridoxal 5'-phosphate as a cofactor.

The catalysed reaction is N(6)-[(R)-lipoyl]-L-lysyl-[glycine-cleavage complex H protein] + glycine + H(+) = N(6)-[(R)-S(8)-aminomethyldihydrolipoyl]-L-lysyl-[glycine-cleavage complex H protein] + CO2. Its function is as follows. The glycine cleavage system catalyzes the degradation of glycine. The P protein binds the alpha-amino group of glycine through its pyridoxal phosphate cofactor; CO(2) is released and the remaining methylamine moiety is then transferred to the lipoamide cofactor of the H protein. The chain is Probable glycine dehydrogenase (decarboxylating) subunit 2 from Shouchella clausii (strain KSM-K16) (Alkalihalobacillus clausii).